The sequence spans 288 residues: MKLLTASVTPFLPDHSIDFLSFENLLRFQERESHGVVLLGSTGESLSMTAKEKESLVSYACSLNLKVPIIVGVPGTSLHEASEWIHTCQSYPIYGFLITTPIYTKPGVHGQTLWFESLLNKANKPAILYNIPSRSGTTLYLDTVRSLAAHPFFYGLKDSGGSIKHCQEYAQMSSDFVLYCGDDGLWPQMYECGARGLISVLSNIWPKEAREWVEDPHHQYRADLWREVSSWLNQTTNPIAIKALLAYKQVIAHNTLRLPLSIQDLQCAESIPEIIKKMAQWKYSCAHV.

T42 provides a ligand contact to pyruvate. Y129 acts as the Proton donor/acceptor in catalysis. K157 (schiff-base intermediate with substrate) is an active-site residue. I198 contributes to the pyruvate binding site.

It belongs to the DapA family. In terms of assembly, homotetramer; dimer of dimers.

Its subcellular location is the cytoplasm. It carries out the reaction L-aspartate 4-semialdehyde + pyruvate = (2S,4S)-4-hydroxy-2,3,4,5-tetrahydrodipicolinate + H2O + H(+). It participates in amino-acid biosynthesis; L-lysine biosynthesis via DAP pathway; (S)-tetrahydrodipicolinate from L-aspartate: step 3/4. Its function is as follows. Catalyzes the condensation of (S)-aspartate-beta-semialdehyde [(S)-ASA] and pyruvate to 4-hydroxy-tetrahydrodipicolinate (HTPA). The protein is 4-hydroxy-tetrahydrodipicolinate synthase of Chlamydia abortus (strain DSM 27085 / S26/3) (Chlamydophila abortus).